The sequence spans 350 residues: Hydroxymethylglutaryl-CoA synthase (350 aa).

E83 serves as the catalytic Proton donor/acceptor. C115 serves as the catalytic Acyl-thioester intermediate. (3S)-3-hydroxy-3-methylglutaryl-CoA is bound by residues C115 and T156. R204 provides a ligand contact to CoA. (3S)-3-hydroxy-3-methylglutaryl-CoA is bound by residues T206 and H239. The Proton donor/acceptor role is filled by H239. K244 is a CoA binding site. Residues N271 and S301 each coordinate (3S)-3-hydroxy-3-methylglutaryl-CoA.

Belongs to the thiolase-like superfamily. Archaeal HMG-CoA synthase family. Interacts with acetoacetyl-CoA thiolase that catalyzes the precedent step in the pathway and with a DUF35 protein. The acetoacetyl-CoA thiolase/HMG-CoA synthase complex channels the intermediate via a fused CoA-binding site, which allows for efficient coupling of the endergonic thiolase reaction with the exergonic HMGCS reaction.

The enzyme catalyses acetoacetyl-CoA + acetyl-CoA + H2O = (3S)-3-hydroxy-3-methylglutaryl-CoA + CoA + H(+). It functions in the pathway metabolic intermediate biosynthesis; (R)-mevalonate biosynthesis; (R)-mevalonate from acetyl-CoA: step 2/3. In terms of biological role, catalyzes the condensation of acetyl-CoA with acetoacetyl-CoA to form 3-hydroxy-3-methylglutaryl-CoA (HMG-CoA). Functions in the mevalonate (MVA) pathway leading to isopentenyl diphosphate (IPP), a key precursor for the biosynthesis of isoprenoid compounds that are building blocks of archaeal membrane lipids. The chain is Hydroxymethylglutaryl-CoA synthase from Thermococcus kodakarensis (strain ATCC BAA-918 / JCM 12380 / KOD1) (Pyrococcus kodakaraensis (strain KOD1)).